The primary structure comprises 123 residues: Small ribosomal subunit protein uS12 (123 aa).

Positions 1–29 (MPTINQLVRKGREPQKAKSKVPAMEQNPQ) are disordered. Residue aspartate 89 is modified to 3-methylthioaspartic acid.

Belongs to the universal ribosomal protein uS12 family. Part of the 30S ribosomal subunit. Contacts proteins S8 and S17. May interact with IF1 in the 30S initiation complex.

Its function is as follows. With S4 and S5 plays an important role in translational accuracy. In terms of biological role, interacts with and stabilizes bases of the 16S rRNA that are involved in tRNA selection in the A site and with the mRNA backbone. Located at the interface of the 30S and 50S subunits, it traverses the body of the 30S subunit contacting proteins on the other side and probably holding the rRNA structure together. The combined cluster of proteins S8, S12 and S17 appears to hold together the shoulder and platform of the 30S subunit. The protein is Small ribosomal subunit protein uS12 of Novosphingobium aromaticivorans (strain ATCC 700278 / DSM 12444 / CCUG 56034 / CIP 105152 / NBRC 16084 / F199).